A 476-amino-acid polypeptide reads, in one-letter code: Adenosylhomocysteinase (476 aa).

3 residues coordinate substrate: Thr-67, Asp-142, and Glu-202. Residue 203–205 participates in NAD(+) binding; the sequence is TTT. Substrate contacts are provided by Lys-232 and Asp-236. Residues Asn-237, 266–271, Glu-289, Asn-324, 345–347, and Asn-390 each bind NAD(+); these read GYGDVG and IGH.

It belongs to the adenosylhomocysteinase family. NAD(+) is required as a cofactor.

It is found in the cytoplasm. The enzyme catalyses S-adenosyl-L-homocysteine + H2O = L-homocysteine + adenosine. The protein operates within amino-acid biosynthesis; L-homocysteine biosynthesis; L-homocysteine from S-adenosyl-L-homocysteine: step 1/1. May play a key role in the regulation of the intracellular concentration of adenosylhomocysteine. This is Adenosylhomocysteinase from Prochlorococcus marinus (strain MIT 9211).